The sequence spans 288 residues: Signal recognition particle receptor FtsY (288 aa).

Residues 93-100 (GINGTGKT), 175-179 (DTAGR), and 233-236 (TKLD) contribute to the GTP site.

Belongs to the GTP-binding SRP family. FtsY subfamily. As to quaternary structure, part of the signal recognition particle protein translocation system, which is composed of SRP and FtsY.

It is found in the cell membrane. It localises to the cytoplasm. The enzyme catalyses GTP + H2O = GDP + phosphate + H(+). Involved in targeting and insertion of nascent membrane proteins into the cytoplasmic membrane. Acts as a receptor for the complex formed by the signal recognition particle (SRP) and the ribosome-nascent chain (RNC). This Thermoplasma acidophilum (strain ATCC 25905 / DSM 1728 / JCM 9062 / NBRC 15155 / AMRC-C165) protein is Signal recognition particle receptor FtsY.